Consider the following 433-residue polypeptide: 23S rRNA (uracil(1939)-C(5))-methyltransferase RlmD (433 aa).

Residues 10-68 form the TRAM domain; the sequence is RTTTRQIITVSVNDLDSFGQGVARHNGKTLFIPGLLPQENAEVAVTEDKKQYARAKVVR. [4Fe-4S] cluster-binding residues include cysteine 81, cysteine 87, cysteine 90, and cysteine 162. Glutamine 265, phenylalanine 294, asparagine 299, glutamate 315, asparagine 342, and aspartate 363 together coordinate S-adenosyl-L-methionine. Cysteine 389 (nucleophile) is an active-site residue.

This sequence belongs to the class I-like SAM-binding methyltransferase superfamily. RNA M5U methyltransferase family. RlmD subfamily.

The enzyme catalyses uridine(1939) in 23S rRNA + S-adenosyl-L-methionine = 5-methyluridine(1939) in 23S rRNA + S-adenosyl-L-homocysteine + H(+). In terms of biological role, catalyzes the formation of 5-methyl-uridine at position 1939 (m5U1939) in 23S rRNA. In Shigella flexneri, this protein is 23S rRNA (uracil(1939)-C(5))-methyltransferase RlmD.